The following is a 2710-amino-acid chain: Serine/threonine-protein kinase ATR (2710 aa).

The FAT domain maps to 1647-2257; the sequence is TLAKASFRCQ…LWMMAAVSKS (611 aa). Residues 2368–2680 form the PI3K/PI4K catalytic domain; that stretch reads IADDAEILNS…GVNAAPSLPL (313 aa). The G-loop stretch occupies residues 2374 to 2380; it reads ILNSLQK. The catalytic loop stretch occupies residues 2545-2553; the sequence is GLGDRHGEN. The segment at 2565-2589 is activation loop; sequence HVDFSCLFDKGLLLEKPEVVPFRFT. Positions 2678-2710 constitute an FATC domain; the sequence is LPLSVEGQARRLIAEAVSHSNLGKMYVWWMAWF.

The protein belongs to the PI3/PI4-kinase family. ATM subfamily.

The protein localises to the nucleus. It catalyses the reaction L-seryl-[protein] + ATP = O-phospho-L-seryl-[protein] + ADP + H(+). The catalysed reaction is L-threonyl-[protein] + ATP = O-phospho-L-threonyl-[protein] + ADP + H(+). In terms of biological role, probable serine/threonine kinase. Seems to play a central role in cell-cycle regulation by transmitting DNA damage signals to downstream effectors of cell-cycle progression. May recognize the substrate consensus sequence [ST]-Q and phosphorylate histone variant H2AX to form H2AXS139ph at sites of DNA damage, thereby regulating DNA damage response mechanism. This is Serine/threonine-protein kinase ATR from Oryza sativa subsp. indica (Rice).